The primary structure comprises 627 residues: WPP domain-interacting tail-anchored protein 2 (627 aa).

Coiled coils occupy residues 81-152, 188-218, and 312-542; these read CGIL…RRTL, LEKS…KLHY, and TLRE…KILR. The interval 577-597 is disordered; sequence SLQEDERTREEPEKQSVSEKS. A compositionally biased stretch (basic and acidic residues) spans 580–597; sequence EDERTREEPEKQSVSEKS. A helical membrane pass occupies residues 606-626; it reads LKHILVVALVFVLFCSFFGVT.

In terms of assembly, component of Ran complexes at least composed of WIT1 or WIT2, RANGAP1 or RANGAP2, and WIP1 or WIP2 or WIP3. Interacts with KAKU1. Core component of the LINC complex which is composed of inner nuclear membrane SUN domain-containing proteins coupled to outer nuclear membrane WIP and WIT proteins. The LINC complex also involves nucleoskeletal proteins CRWN/LINC and possibly KAKU4 and the cytoskeletal myosin KAKU1. Interacts with WIP1, WIP2 and WIP3. As to expression, ubiquitous.

It is found in the membrane. Together with WIT1, required for the nuclear envelope docking of RANGAP proteins in root tips. Plays a role in nuclear shape determination. As component of the SUN-WIP-WIT2-KAKU1 complex, mediates the transfer of cytoplasmic forces to the nuclear envelope (NE), leading to nuclear shape changes. The chain is WPP domain-interacting tail-anchored protein 2 (WIT2) from Arabidopsis thaliana (Mouse-ear cress).